Reading from the N-terminus, the 279-residue chain is Pantothenate synthetase (279 aa).

26-33 (MGGLHEGH) is an ATP binding site. His-33 serves as the catalytic Proton donor. Position 57 (Gln-57) interacts with (R)-pantoate. Gln-57 is a binding site for beta-alanine. 143–146 (GKKD) lines the ATP pocket. Gln-149 serves as a coordination point for (R)-pantoate. ATP-binding positions include Val-172 and 180–183 (LSSR).

The protein belongs to the pantothenate synthetase family. As to quaternary structure, homodimer.

The protein localises to the cytoplasm. It carries out the reaction (R)-pantoate + beta-alanine + ATP = (R)-pantothenate + AMP + diphosphate + H(+). The protein operates within cofactor biosynthesis; (R)-pantothenate biosynthesis; (R)-pantothenate from (R)-pantoate and beta-alanine: step 1/1. In terms of biological role, catalyzes the condensation of pantoate with beta-alanine in an ATP-dependent reaction via a pantoyl-adenylate intermediate. This chain is Pantothenate synthetase, found in Nitrosospira multiformis (strain ATCC 25196 / NCIMB 11849 / C 71).